Consider the following 238-residue polypeptide: Sugar fermentation stimulation protein homolog (238 aa).

Belongs to the SfsA family.

In Alkalilimnicola ehrlichii (strain ATCC BAA-1101 / DSM 17681 / MLHE-1), this protein is Sugar fermentation stimulation protein homolog.